A 323-amino-acid polypeptide reads, in one-letter code: tRNA dimethylallyltransferase (323 aa).

Position 13-20 (13-20 (GPTASGKT)) interacts with ATP. 15 to 20 (TASGKT) contacts substrate. Interaction with substrate tRNA regions lie at residues 42–45 (DSAL), 166–170 (QRIQR), 251–256 (RCVGYR), and 284–291 (KRQITWLR).

It belongs to the IPP transferase family. Monomer. Requires Mg(2+) as cofactor.

It catalyses the reaction adenosine(37) in tRNA + dimethylallyl diphosphate = N(6)-dimethylallyladenosine(37) in tRNA + diphosphate. Functionally, catalyzes the transfer of a dimethylallyl group onto the adenine at position 37 in tRNAs that read codons beginning with uridine, leading to the formation of N6-(dimethylallyl)adenosine (i(6)A). In Acidovorax sp. (strain JS42), this protein is tRNA dimethylallyltransferase.